Consider the following 552-residue polypeptide: Tyrosine-protein kinase Src64B (552 aa).

The region spanning 95–156 (VLKRVVVALY…PLNFVAEERS (62 aa)) is the SH3 domain. The SH2 domain maps to 162–259 (WFFENVLRKE…GLCHILSRPC (98 aa)). Residues 284–537 (IQLLRKLGRG…TFEFLNHYFE (254 aa)) enclose the Protein kinase domain. ATP contacts are provided by residues 290-298 (LGRGNFGEV) and lysine 312. Aspartate 404 serves as the catalytic Proton acceptor. At tyrosine 434 the chain carries Phosphotyrosine; by autocatalysis.

This sequence belongs to the protein kinase superfamily. Tyr protein kinase family. SRC subfamily. As to quaternary structure, interacts with hzg. In terms of processing, phosphorylated. After the first 8 hours of development, accumulates almost exclusively in neural tissues such as the brain, ventral nerve chord, and eye-antennal disks, and in differentiating smooth muscle.

It carries out the reaction L-tyrosyl-[protein] + ATP = O-phospho-L-tyrosyl-[protein] + ADP + H(+). Tyrosine-protein kinase that may play a role in the development of neural tissue and smooth muscle. May contribute to tyrosine phosphorylation of Dscam1, a cell surface receptor involved in targeting of growing axons during eye morphogenesis. In Drosophila melanogaster (Fruit fly), this protein is Tyrosine-protein kinase Src64B (Src64B).